The chain runs to 82 residues: EMBRYO SURROUNDING FACTOR 1-like protein 10 (82 aa).

An N-terminal signal peptide occupies residues 1–22 (MSSLYFAILCLFMIFLVPLHEF). Disulfide bonds link Cys-39–Cys-55, Cys-44–Cys-74, Cys-53–Cys-70, and Cys-56–Cys-63.

This sequence belongs to the MEG family. Expressed in stems, leaves and flowers.

This Arabidopsis thaliana (Mouse-ear cress) protein is EMBRYO SURROUNDING FACTOR 1-like protein 10 (ESFL10).